Here is a 60-residue protein sequence, read N- to C-terminus: Myrmicitoxin(1)-Pr4b (60 aa).

The N-terminal stretch at 1–23 (MKAIIFLFAVLTVVAIIIPIISG) is a signal peptide. Residues 24 to 33 (EPNAGPHAAS) constitute a propeptide that is removed on maturation. At Gln59 the chain carries Glutamine amide.

This sequence belongs to the formicidae venom clade 2 family. Expressed by the venom gland.

The protein resides in the secreted. In terms of biological role, toxin that causes a rapid and irreversible paralysis when intrathoracically injected into insects (blowflies). Does not cause spontaneous nocifensive behaviors by intraplantar injection in mice. This chain is Myrmicitoxin(1)-Pr4b, found in Pogonomyrmex rugosus (Desert harvester ant).